We begin with the raw amino-acid sequence, 433 residues long: uncharacterized protein (433 aa).

In terms of domain architecture, HD spans 61-178 (RFNHSLGVYE…QIDADRMDYL (118 aa)).

This is an uncharacterized protein from Bacillus subtilis (strain 168).